Reading from the N-terminus, the 257-residue chain is Insulin-induced gene 1 protein (257 aa).

Topologically, residues 1–64 (MPRLHDHVWS…ARPGSWHHDL (64 aa)) are cytoplasmic. A disordered region spans residues 32–54 (CPQGSGAPEPAPRSPRAGTAGCG). The helical transmembrane segment at 65-87 (VQRSLVLFSFGVVLALVLNLLQI) threads the bilayer. Over 88–106 (QRNVTLFPDEVIATIFSSA) the chain is Extracellular. Residues 107–124 (WWVPPCCGTAAAVVGLLY) form a helical membrane-spanning segment. Residues 125–139 (PCIDSHLGEPHKFKR) lie on the Cytoplasmic side of the membrane. Residues Lys136 and Lys138 each participate in a glycyl lysine isopeptide (Lys-Gly) (interchain with G-Cter in ubiquitin) cross-link. Residues 140 to 162 (EWASVMRCIAVFVGINHASAKLD) traverse the membrane as a helical segment. Over 163–165 (FAN) the chain is Extracellular. A helical transmembrane segment spans residues 166–184 (NVQLSLTLAALSLGLWWTF). Over 185-189 (DRSRS) the chain is Cytoplasmic. Ser187 carries the phosphoserine modification. A helical transmembrane segment spans residues 190-211 (GLGLGITIAFLATLITQFLVYN). Residues 212-225 (GVYQYTSPDFLYIR) are Extracellular-facing. The chain crosses the membrane as a helical span at residues 226-243 (SWLPCIFFSGGVTVGNIG). The Cytoplasmic portion of the chain corresponds to 244–257 (RQLAMGVPEKPHSD). Positions 251–257 (PEKPHSD) match the KxHxx motif.

The protein belongs to the INSIG family. As to quaternary structure, interacts with SCAP; interaction is direct and only takes place in the presence of sterols; it prevents interaction between SCAP and the coat protein complex II (COPII). Associates with the SCAP-SREBP complex (composed of SCAP and SREBF1/SREBP1 or SREBF2/SREBP2); association is mediated via its interaction with SCAP and only takes place in the presence of sterols. Interaction with SCAP is mutually exclusive with PAQR3. Interacts with HMGCR (via its SSD); the interaction, accelerated by sterols, leads to the recruitment of HMGCR to AMFR/gp78 for its ubiquitination by the sterol-mediated ERAD pathway. Interacts with AMFR/gp78 (via its membrane domain); the interaction recruits HMCR at the ER membrane for its ubiquitination and degradation by the sterol-mediated ERAD pathway. Interacts with SOAT2/ACAT2; leading to promote recruitment of AMFR/gp78 and subsequent ubiquitination of SOAT2/ACAT2. Interacts with RNF139. Interacts with RNF145. Phosphorylation at Ser-187 by PCK1 reduces binding to oxysterol, disrupting the interaction between INSIG1 and SCAP, thereby promoting nuclear translocation of SREBP proteins (SREBF1/SREBP1 or SREBF2/SREBP2) and subsequent transcription of downstream lipogenesis-related genes. In terms of processing, ubiquitinated by AMFR/gp78 in response to sterol deprivation, leading to its degradation: when the SCAP-SREBP complex becomes dissociated from INSIG1, INSIG1 is then ubiquitinated and degraded in proteasomes. Although ubiquitination is required for rapid INSIG1 degradation, it is not required for release of the SCAP-SREBP complex. Ubiquitinated by RNF139.

It localises to the endoplasmic reticulum membrane. Oxysterol-binding protein that mediates feedback control of cholesterol synthesis by controlling both endoplasmic reticulum to Golgi transport of SCAP and degradation of HMGCR. Acts as a negative regulator of cholesterol biosynthesis by mediating the retention of the SCAP-SREBP complex in the endoplasmic reticulum, thereby blocking the processing of sterol regulatory element-binding proteins (SREBPs) SREBF1/SREBP1 and SREBF2/SREBP2. Binds oxysterol, including 25-hydroxycholesterol, regulating interaction with SCAP and retention of the SCAP-SREBP complex in the endoplasmic reticulum. In presence of oxysterol, interacts with SCAP, retaining the SCAP-SREBP complex in the endoplasmic reticulum, thereby preventing SCAP from escorting SREBF1/SREBP1 and SREBF2/SREBP2 to the Golgi. Sterol deprivation or phosphorylation by PCK1 reduce oxysterol-binding, disrupting the interaction between INSIG1 and SCAP, thereby promoting Golgi transport of the SCAP-SREBP complex, followed by processing and nuclear translocation of SREBF1/SREBP1 and SREBF2/SREBP2. Also regulates cholesterol synthesis by regulating degradation of HMGCR: initiates the sterol-mediated ubiquitin-mediated endoplasmic reticulum-associated degradation (ERAD) of HMGCR via recruitment of the reductase to the ubiquitin ligases AMFR/gp78 and/or RNF139. Also regulates degradation of SOAT2/ACAT2 when the lipid levels are low: initiates the ubiquitin-mediated degradation of SOAT2/ACAT2 via recruitment of the ubiquitin ligases AMFR/gp78. This Cricetulus griseus (Chinese hamster) protein is Insulin-induced gene 1 protein.